Here is a 456-residue protein sequence, read N- to C-terminus: tRNA-2-methylthio-N(6)-dimethylallyladenosine synthase (456 aa).

The 118-residue stretch at 3 to 120 (KKVYVKTFGC…LPQMIDQRRA (118 aa)) folds into the MTTase N-terminal domain. [4Fe-4S] cluster is bound by residues cysteine 12, cysteine 49, cysteine 83, cysteine 157, cysteine 161, and cysteine 164. A Radical SAM core domain is found at 143-377 (RIDGPSAFVS…QATIEENVQR (235 aa)). Positions 380-447 (QAMVGKVERI…PHSLRGELVM (68 aa)) constitute a TRAM domain.

This sequence belongs to the methylthiotransferase family. MiaB subfamily. Monomer. Requires [4Fe-4S] cluster as cofactor.

Its subcellular location is the cytoplasm. The enzyme catalyses N(6)-dimethylallyladenosine(37) in tRNA + (sulfur carrier)-SH + AH2 + 2 S-adenosyl-L-methionine = 2-methylsulfanyl-N(6)-dimethylallyladenosine(37) in tRNA + (sulfur carrier)-H + 5'-deoxyadenosine + L-methionine + A + S-adenosyl-L-homocysteine + 2 H(+). Functionally, catalyzes the methylthiolation of N6-(dimethylallyl)adenosine (i(6)A), leading to the formation of 2-methylthio-N6-(dimethylallyl)adenosine (ms(2)i(6)A) at position 37 in tRNAs that read codons beginning with uridine. The polypeptide is tRNA-2-methylthio-N(6)-dimethylallyladenosine synthase (Paraburkholderia phymatum (strain DSM 17167 / CIP 108236 / LMG 21445 / STM815) (Burkholderia phymatum)).